Reading from the N-terminus, the 753-residue chain is MTILNHTLGFPRVGLRRELKKAQESYWAGNSTREELLAVGRELRARHWDQQKQAGIDLLPVGDFAWYDHVLTTSLLLGNVPARHQNKDGSVDIDTLFRIGRGRAPTGEPAAAAEMTKWFNTNYHYMVPEFVKGQQFKLTWTQLLEEVDEALALGHNVKPVLLGPVTWLWLGKVKGEQFDRLSLLNDILPVYQQVLAELAKRGIEWVQIDEPALVLELPQAWLDAYKPAYDALQGQVKLLLTTYFEGVTPNLDTITALPVQGLHVDLVHGKDDVVELHKRLPSDWLLSAGLINGRNVWRADLTEKYAQIKDIVGKRDLWVASSCSLLHSPIDLSVETRLDAEVKSWFAFALQKCHELALLRDVLNSGDTAALAEWSAPIQARRHSTRVHNPAVEKRLAAITAQDSQRANVYEVRAEAQRARFKLPAWPTTTIGSFPQTTEIRTLRLDFKKGNLDANNYRTGIAEHIRQAIVEQERLGLDVLVHGEAERNDMVEYFGEHLDGFVFTQNGWVQSYGSRCVKPPIVIGDVSRPAPITVEWAKYAQSLTDKPVKGMLTGPVTILCWSFPREDVSRETIAKQIALALRDEVADLEAAGIGIIQIDEPALREGLPLRRSDWDAYLQWGVEAFRINAAVAKDDTQIHTHMCYCEFNDIMDSIAALDADVITIETSRSDMELLESFEEFDYPNEIGPGVYDIHSPNVPSVEWIEALLKKAAKRIPAERLWVNPDCGLKTRGWPETRAALANMVQAAQNLRRG.

5-methyltetrahydropteroyltri-L-glutamate contacts are provided by residues 17-20 (RELK) and Lys-117. L-homocysteine-binding positions include 431 to 433 (IGS) and Glu-484. L-methionine-binding positions include 431-433 (IGS) and Glu-484. 5-methyltetrahydropteroyltri-L-glutamate contacts are provided by residues 515–516 (RC) and Trp-561. Asp-599 contributes to the L-homocysteine binding site. Asp-599 is a binding site for L-methionine. A 5-methyltetrahydropteroyltri-L-glutamate-binding site is contributed by Glu-605. Zn(2+)-binding residues include His-641, Cys-643, and Glu-665. His-694 (proton donor) is an active-site residue. Zn(2+) is bound at residue Cys-726.

It belongs to the vitamin-B12 independent methionine synthase family. Zn(2+) is required as a cofactor.

It carries out the reaction 5-methyltetrahydropteroyltri-L-glutamate + L-homocysteine = tetrahydropteroyltri-L-glutamate + L-methionine. It participates in amino-acid biosynthesis; L-methionine biosynthesis via de novo pathway; L-methionine from L-homocysteine (MetE route): step 1/1. Functionally, catalyzes the transfer of a methyl group from 5-methyltetrahydrofolate to homocysteine resulting in methionine formation. The chain is 5-methyltetrahydropteroyltriglutamate--homocysteine methyltransferase from Shigella dysenteriae serotype 1 (strain Sd197).